The primary structure comprises 902 residues: Probable dipeptidyl-aminopeptidase B (902 aa).

2 disordered regions span residues 1–23 (MTRRRSTSGTSSRSSTDSGLSVD) and 53–72 (DAEADVDEPFLPTSSKKLGS). The Cytoplasmic portion of the chain corresponds to 1-78 (MTRRRSTSGT…KLGSGSRTRQ (78 aa)). Low complexity predominate over residues 7 to 21 (TSGTSSRSSTDSGLS). A helical; Signal-anchor for type II membrane protein membrane pass occupies residues 79–99 (IFWALVILCLGGWVLALVLFL). Over 100 to 902 (THGRASSQTA…VKRSVPAFAH (803 aa)) the chain is Vacuolar. N-linked (GlcNAc...) asparagine glycans are attached at residues asparagine 335 and asparagine 626. Serine 740 functions as the Charge relay system in the catalytic mechanism. Residues asparagine 794 and asparagine 799 are each glycosylated (N-linked (GlcNAc...) asparagine). Residues aspartate 817 and histidine 850 each act as charge relay system in the active site.

Belongs to the peptidase S9B family.

The protein resides in the vacuole membrane. The catalysed reaction is Release of an N-terminal dipeptide, Xaa-Yaa-|-Zaa-, from a polypeptide, preferentially when Yaa is Pro, provided Zaa is neither Pro nor hydroxyproline.. Type IV dipeptidyl-peptidase which removes N-terminal dipeptides sequentially from polypeptides having unsubstituted N-termini provided that the penultimate residue is proline. The sequence is that of Probable dipeptidyl-aminopeptidase B (dapB) from Aspergillus oryzae (strain ATCC 42149 / RIB 40) (Yellow koji mold).